The following is a 151-amino-acid chain: Small ribosomal subunit protein uS15 (151 aa).

Positions 1–20 (MARLHSGKRGSSGSTRPLRT) are disordered.

The protein belongs to the universal ribosomal protein uS15 family. In terms of assembly, part of the 30S ribosomal subunit.

The polypeptide is Small ribosomal subunit protein uS15 (Methanococcus maripaludis (strain C7 / ATCC BAA-1331)).